The sequence spans 846 residues: Enhancer of polycomb-like protein 1 (846 aa).

5 disordered regions span residues 169-204 (FNSK…KGDA), 391-466 (TSDE…APDA), 587-609 (EKKR…PKAM), 682-702 (AADA…PQPN), and 759-804 (QVQA…GVKQ). A compositionally biased stretch (basic and acidic residues) spans 180–203 (VKSDKEQGRGMRVKGKDREKEKGD). Residues 411 to 426 (PSLSGQTPLTSGQSSS) are compositionally biased toward polar residues. Over residues 432–452 (TDKDREERAQRERYDAQRNAE) the composition is skewed to basic and acidic residues. Residues 434–490 (KDREERAQRERYDAQRNAERSGILSGRSNAPDALKERLQALQQKTEEMLARKKEQDA) are a coiled coil. The span at 686-702 (KPPPAPIFQKPPAPQPN) shows a compositional bias: pro residues. A compositionally biased stretch (low complexity) spans 759 to 773 (QVQAQGQGHPQAHLQ). The span at 774 to 796 (THPQGVSQPNGVNSPMPNGQQML) shows a compositional bias: polar residues.

The protein belongs to the enhancer of polycomb family. In terms of assembly, component of the NuA4 histone acetyltransferase complex.

Its subcellular location is the nucleus. In terms of biological role, component of the NuA4 histone acetyltransferase complex which is involved in transcriptional activation of selected genes principally by acetylation of nucleosomal histone H4 and H2A. The NuA4 complex is also involved in DNA repair. Involved in gene silencing by neighboring heterochromatin, blockage of the silencing spreading along the chromosome, and required for cell cycle progression through G2/M. The sequence is that of Enhancer of polycomb-like protein 1 (EPL1) from Cryptococcus neoformans var. neoformans serotype D (strain B-3501A) (Filobasidiella neoformans).